An 805-amino-acid chain; its full sequence is Polyribonucleotide nucleotidyltransferase (805 aa).

The Mg(2+) site is built by Asp491 and Asp497. The KH domain maps to Pro558–Ile617. Residues Gly627–Arg694 enclose the S1 motif domain. The tract at residues Asp702–Phe805 is disordered.

It belongs to the polyribonucleotide nucleotidyltransferase family. It depends on Mg(2+) as a cofactor.

The protein resides in the cytoplasm. It carries out the reaction RNA(n+1) + phosphate = RNA(n) + a ribonucleoside 5'-diphosphate. Functionally, involved in mRNA degradation. Catalyzes the phosphorolysis of single-stranded polyribonucleotides processively in the 3'- to 5'-direction. In Anaplasma marginale (strain Florida), this protein is Polyribonucleotide nucleotidyltransferase.